Consider the following 473-residue polypeptide: Venom prothrombin activator vestarin-D1 (473 aa).

The first 20 residues, 1-20 (MAPQLLLCLIQTFLWSLPEA), serve as a signal peptide directing secretion. Residues 21–40 (ESNVFLKSNVANRFLQRTKR) constitute a propeptide that is removed on maturation. The 46-residue stretch at 41 to 86 (ANSGFEEIYPANFERECVEERCSKEEAREVFEDDEKTEAFWTVYVD) folds into the Gla domain. 4-carboxyglutamate is present on residues Glu46, Glu47, Glu54, Glu56, Glu59, Glu60, Glu65, Glu66, Glu69, Glu72, and Glu75. A disulfide bridge links Cys57 with Cys62. An EGF-like 1; calcium-binding domain is found at 86 to 122 (DGDQCLSNPCHYGGTCKDGIGSYTCTCLAGYEGKNCE). 10 disulfide bridges follow: Cys90–Cys101, Cys95–Cys110, Cys112–Cys121, Cys129–Cys140, Cys136–Cys149, Cys151–Cys164, Cys172–Cys335, Cys235–Cys240, Cys383–Cys397, and Cys408–Cys436. A glycan (O-linked (Hex...) serine) is linked at Ser92. The 36-residue stretch at 129–164 (CRVDNGNCWHFCKPVQNDTQCSCAEGYRLGDNGFSC) folds into the EGF-like 2 domain. Positions 182-228 (REASLPDFQTDFSDDYDAIDENNLIETVQSQSATLLKKSDNPNPDIR) are cleaved as a propeptide — activation peptide. Residues 229-460 (IVNGLDCKLG…FLPWIKTIMR (232 aa)) form the Peptidase S1 domain. The active-site Charge relay system is His270. N-linked (GlcNAc...) asparagine glycosylation is present at Asn273. Residue Asp315 is the Charge relay system of the active site. Ser412 (charge relay system) is an active-site residue.

This sequence belongs to the peptidase S1 family. Snake venom subfamily. As to quaternary structure, heterodimer of a light chain and a heavy chain; disulfide-linked. The vitamin K-dependent, enzymatic carboxylation of some glutamate residues allows the modified protein to bind calcium. As to expression, expressed by the venom gland.

The protein localises to the secreted. It catalyses the reaction Selective cleavage of Arg-|-Thr and then Arg-|-Ile bonds in prothrombin to form thrombin.. In terms of biological role, snake prothrombin activator that attacks the hemostatic system of prey. This protein is functionally similar to blood coagulation factor Xa. The chain is Venom prothrombin activator vestarin-D1 from Demansia vestigiata (Lesser black whip snake).